Here is a 338-residue protein sequence, read N- to C-terminus: Phenylalanine--tRNA ligase alpha subunit (338 aa).

E253 is a Mg(2+) binding site.

Belongs to the class-II aminoacyl-tRNA synthetase family. Phe-tRNA synthetase alpha subunit type 1 subfamily. As to quaternary structure, tetramer of two alpha and two beta subunits. Requires Mg(2+) as cofactor.

It localises to the cytoplasm. The catalysed reaction is tRNA(Phe) + L-phenylalanine + ATP = L-phenylalanyl-tRNA(Phe) + AMP + diphosphate + H(+). This is Phenylalanine--tRNA ligase alpha subunit from Legionella pneumophila (strain Lens).